A 1483-amino-acid chain; its full sequence is Rho GTPase-activating protein 23 (1483 aa).

The tract at residues 15–34 (PEPRPPQLPLGPRDGCSSGR) is disordered. The PDZ domain occupies 71-155 (HCILKEEENG…TLELSIMPKD (85 aa)). Disordered stretches follow at residues 212-276 (ISAL…PGSR) and 300-345 (AGER…GQEG). Residues 316 to 325 (SQDRLEDVTT) are compositionally biased toward basic and acidic residues. Residues 331–342 (CSTSQDALSQLG) show a composition bias toward polar residues. 2 positions are modified to phosphoserine: Ser361 and Ser372. The interval 385-407 (PSARTSACPSRDLTQAPPPSGLQ) is disordered. Ser421 carries the phosphoserine modification. 2 disordered regions span residues 448–485 (SLAQ…DHRD) and 508–527 (NLGF…RLGR). Residues Ser515, Ser579, Ser607, and Ser619 each carry the phosphoserine modification. A Phosphothreonine modification is found at Thr652. A phosphoserine mark is found at Ser655, Ser658, and Ser673. The 121-residue stretch at 684 to 804 (DIRREGWLYY…WIRAIRENSR (121 aa)) folds into the PH domain. The interval 827–848 (KVSHSSGPKADSSPKGSRGLGG) is disordered. Residue Lys850 forms a Glycyl lysine isopeptide (Lys-Gly) (interchain with G-Cter in SUMO2) linkage. Disordered stretches follow at residues 860–879 (RGLR…VAAP), 1093–1150 (FSDD…SWVP), 1171–1361 (KRKK…GSRP), and 1419–1469 (ELGG…LQGL). Positions 901 to 1093 (IRLEECQPAT…TLIQHSDWFF (193 aa)) constitute a Rho-GAP domain. Over residues 1099 to 1110 (KGERTPVDDKEP) the composition is skewed to basic and acidic residues. Polar residues-rich tracts occupy residues 1133–1144 (GSDSTTCSSAKS) and 1236–1248 (SIVS…STMD). Low complexity predominate over residues 1338-1351 (GSASSSSQESLRPP). Residues 1440–1457 (SGLSSLESTKARASSAAS) show a composition bias toward polar residues.

In terms of biological role, GTPase activator for the Rho-type GTPases by converting them to an inactive GDP-bound state. This is Rho GTPase-activating protein 23 (Arhgap23) from Mus musculus (Mouse).